The sequence spans 99 residues: uncharacterized protein (99 aa).

This is an uncharacterized protein from Vibrio alginolyticus.